The following is a 113-amino-acid chain: Protein ZEO1 (113 aa).

The segment covering 1-16 has biased composition (polar residues); the sequence is MSEIQNKAETAAQDVQ. Residues 1–96 form a disordered region; the sequence is MSEIQNKAET…AVSEKKETKK (96 aa). S2 is subject to N-acetylserine. Position 2 is a phosphoserine (S2). Positions 2 to 97 form a coiled coil; that stretch reads SEIQNKAETA…VSEKKETKKE (96 aa). The segment covering 17–37 has biased composition (basic and acidic residues); sequence QKLEETKESLQNKGQEVKEQA. Residues K18 and K23 each participate in a glycyl lysine isopeptide (Lys-Gly) (interchain with G-Cter in ubiquitin) cross-link. Residue S25 is modified to Phosphoserine. Residues K29 and K34 each participate in a glycyl lysine isopeptide (Lys-Gly) (interchain with G-Cter in ubiquitin) cross-link. S40 carries the post-translational modification Phosphoserine. K45 participates in a covalent cross-link: Glycyl lysine isopeptide (Lys-Gly) (interchain with G-Cter in ubiquitin). T49 is modified (phosphothreonine). The segment covering 53–82 has biased composition (basic and acidic residues); that stretch reads EQVKKEEQNIADGVEQKKTEAANKVEETKK. Residues K57 and K82 each participate in a glycyl lysine isopeptide (Lys-Gly) (interchain with G-Cter in ubiquitin) cross-link.

In terms of assembly, interacts with MID2. Post-translationally, phosphorylation of Ser-25 is induced 2-fold in response to mating pheromone.

It localises to the cell membrane. In terms of biological role, acts antagonistically to MID2 in signaling cell wall stress to the PKC1-MPK1 cell integrity pathway. The protein is Protein ZEO1 (ZEO1) of Saccharomyces cerevisiae (strain ATCC 204508 / S288c) (Baker's yeast).